A 178-amino-acid polypeptide reads, in one-letter code: Large ribosomal subunit protein bL25 (178 aa).

It belongs to the bacterial ribosomal protein bL25 family. CTC subfamily. Part of the 50S ribosomal subunit; part of the 5S rRNA/L5/L18/L25 subcomplex. Contacts the 5S rRNA. Binds to the 5S rRNA independently of L5 and L18.

Functionally, this is one of the proteins that binds to the 5S RNA in the ribosome where it forms part of the central protuberance. The protein is Large ribosomal subunit protein bL25 of Helicobacter pylori (strain Shi470).